A 258-amino-acid chain; its full sequence is Phosphate import ATP-binding protein PstB (258 aa).

Residues 12 to 253 (IEVKNLNFYY…PARKETEDYI (242 aa)) enclose the ABC transporter domain. Position 44–51 (44–51 (GPSGCGKS)) interacts with ATP.

Belongs to the ABC transporter superfamily. Phosphate importer (TC 3.A.1.7) family. The complex is composed of two ATP-binding proteins (PstB), two transmembrane proteins (PstC and PstA) and a solute-binding protein (PstS).

The protein localises to the cell inner membrane. It carries out the reaction phosphate(out) + ATP + H2O = ADP + 2 phosphate(in) + H(+). In terms of biological role, part of the ABC transporter complex PstSACB involved in phosphate import. Responsible for energy coupling to the transport system. The polypeptide is Phosphate import ATP-binding protein PstB (Bordetella avium (strain 197N)).